A 316-amino-acid chain; its full sequence is Beta-ketoacyl-[acyl-carrier-protein] synthase III (316 aa).

Active-site residues include cysteine 112 and histidine 243. Residues glutamine 244–arginine 248 form an ACP-binding region. Asparagine 273 is a catalytic residue.

Belongs to the thiolase-like superfamily. FabH family. In terms of assembly, homodimer.

The protein resides in the cytoplasm. The catalysed reaction is malonyl-[ACP] + acetyl-CoA + H(+) = 3-oxobutanoyl-[ACP] + CO2 + CoA. The protein operates within lipid metabolism; fatty acid biosynthesis. Functionally, catalyzes the condensation reaction of fatty acid synthesis by the addition to an acyl acceptor of two carbons from malonyl-ACP. Catalyzes the first condensation reaction which initiates fatty acid synthesis and may therefore play a role in governing the total rate of fatty acid production. Possesses both acetoacetyl-ACP synthase and acetyl transacylase activities. Its substrate specificity determines the biosynthesis of branched-chain and/or straight-chain of fatty acids. In Yersinia pestis (strain Pestoides F), this protein is Beta-ketoacyl-[acyl-carrier-protein] synthase III.